The chain runs to 225 residues: Putative tyrosine-protein phosphatase OCA1 (225 aa).

Positions 1 to 11 (MTDNCREDDDN) are enriched in acidic residues. The tract at residues 1–24 (MTDNCREDDDNLGTSGDNALSAPT) is disordered. The segment covering 12–24 (LGTSGDNALSAPT) has biased composition (polar residues). Residues 42-196 (NFCPVERYLY…FDTKSVTIDK (155 aa)) enclose the Tyrosine-protein phosphatase domain. Cys-138 serves as the catalytic Phosphocysteine intermediate.

This sequence belongs to the protein-tyrosine phosphatase family.

The protein resides in the cytoplasm. It carries out the reaction O-phospho-L-tyrosyl-[protein] + H2O = L-tyrosyl-[protein] + phosphate. In terms of biological role, putative tyrosine-protein phosphatase required for protection against superoxide stress. In Eremothecium gossypii (strain ATCC 10895 / CBS 109.51 / FGSC 9923 / NRRL Y-1056) (Yeast), this protein is Putative tyrosine-protein phosphatase OCA1 (OCA1).